A 190-amino-acid polypeptide reads, in one-letter code: UPF0301 protein RSc0675 (190 aa).

It belongs to the UPF0301 (AlgH) family.

The chain is UPF0301 protein RSc0675 from Ralstonia nicotianae (strain ATCC BAA-1114 / GMI1000) (Ralstonia solanacearum).